Here is a 454-residue protein sequence, read N- to C-terminus: Bifunctional protein GlmU (454 aa).

A pyrophosphorylase region spans residues 1-231; that stretch reads MSRPTVSLIV…EAETLGVNTR (231 aa). UDP-N-acetyl-alpha-D-glucosamine-binding positions include 11 to 14, Lys25, Gln78, 83 to 84, 106 to 108, Gly143, Glu157, Asn172, and Asn229; these read LAAG, GT, and YGD. A Mg(2+)-binding site is contributed by Asp108. Asn229 provides a ligand contact to Mg(2+). The tract at residues 232–252 is linker; it reads AQLAAAEAEFQRRARAAALED. The N-acetyltransferase stretch occupies residues 253 to 454; the sequence is GVTLTAPDTV…ARDASKKGTN (202 aa). The UDP-N-acetyl-alpha-D-glucosamine site is built by Arg318 and Lys336. The active-site Proton acceptor is His348. Residues Tyr351 and Asn362 each coordinate UDP-N-acetyl-alpha-D-glucosamine. Residues Ala365, 371 to 372, Ser390, Ser408, and Arg425 each bind acetyl-CoA; that span reads NY.

It in the N-terminal section; belongs to the N-acetylglucosamine-1-phosphate uridyltransferase family. The protein in the C-terminal section; belongs to the transferase hexapeptide repeat family. As to quaternary structure, homotrimer. Mg(2+) serves as cofactor.

Its subcellular location is the cytoplasm. It catalyses the reaction alpha-D-glucosamine 1-phosphate + acetyl-CoA = N-acetyl-alpha-D-glucosamine 1-phosphate + CoA + H(+). The enzyme catalyses N-acetyl-alpha-D-glucosamine 1-phosphate + UTP + H(+) = UDP-N-acetyl-alpha-D-glucosamine + diphosphate. Its pathway is nucleotide-sugar biosynthesis; UDP-N-acetyl-alpha-D-glucosamine biosynthesis; N-acetyl-alpha-D-glucosamine 1-phosphate from alpha-D-glucosamine 6-phosphate (route II): step 2/2. It participates in nucleotide-sugar biosynthesis; UDP-N-acetyl-alpha-D-glucosamine biosynthesis; UDP-N-acetyl-alpha-D-glucosamine from N-acetyl-alpha-D-glucosamine 1-phosphate: step 1/1. The protein operates within bacterial outer membrane biogenesis; LPS lipid A biosynthesis. Functionally, catalyzes the last two sequential reactions in the de novo biosynthetic pathway for UDP-N-acetylglucosamine (UDP-GlcNAc). The C-terminal domain catalyzes the transfer of acetyl group from acetyl coenzyme A to glucosamine-1-phosphate (GlcN-1-P) to produce N-acetylglucosamine-1-phosphate (GlcNAc-1-P), which is converted into UDP-GlcNAc by the transfer of uridine 5-monophosphate (from uridine 5-triphosphate), a reaction catalyzed by the N-terminal domain. The polypeptide is Bifunctional protein GlmU (Cereibacter sphaeroides (strain ATCC 17025 / ATH 2.4.3) (Rhodobacter sphaeroides)).